A 208-amino-acid chain; its full sequence is FMN-dependent NADH:quinone oxidoreductase (208 aa).

Residues serine 9, 15–17 (SVS), 96–99 (MYNF), and 140–143 (TRGG) contribute to the FMN site.

Belongs to the azoreductase type 1 family. As to quaternary structure, homodimer. The cofactor is FMN.

It carries out the reaction 2 a quinone + NADH + H(+) = 2 a 1,4-benzosemiquinone + NAD(+). It catalyses the reaction N,N-dimethyl-1,4-phenylenediamine + anthranilate + 2 NAD(+) = 2-(4-dimethylaminophenyl)diazenylbenzoate + 2 NADH + 2 H(+). Its function is as follows. Quinone reductase that provides resistance to thiol-specific stress caused by electrophilic quinones. Functionally, also exhibits azoreductase activity. Catalyzes the reductive cleavage of the azo bond in aromatic azo compounds to the corresponding amines. The chain is FMN-dependent NADH:quinone oxidoreductase from Azospirillum brasilense.